We begin with the raw amino-acid sequence, 233 residues long: Glycolipid transfer protein 3 (233 aa).

A ganglioside GM3 (d18:1(4E)) is bound by residues Asp79, Asn83, Trp126, and His165.

The protein belongs to the GLTP family.

Its function is as follows. May be involved in glycolipids transfer. The sequence is that of Glycolipid transfer protein 3 from Arabidopsis thaliana (Mouse-ear cress).